We begin with the raw amino-acid sequence, 213 residues long: Golgi to ER traffic protein 1 (213 aa).

Residues 1–4 (MESW) are Lumenal-facing. The helical transmembrane segment at 5-25 (LLVILAFLVLERLWPLIDSLI) threads the bilayer. Residues 26–98 (QRFAQANSTK…RTKASLKKVK (73 aa)) lie on the Cytoplasmic side of the membrane. Positions 55 to 99 (AQDQYVKWTKNNRTLEKINKQIEEEKKQLLSQVDRTKASLKKVKL) form a coiled coil. A helical membrane pass occupies residues 99–119 (LVLITVPFTILKFYKGKMPIY). The Lumenal segment spans residues 120–158 (DLPKGLFPNYLQGLFQHGWVYLALGPLNIKKVGDGTHVT). A helical transmembrane segment spans residues 159-175 (VSLAIWLFALLKVVSTL). Residues 176 to 213 (GNIWESLTAPAIPAPTITTDPIDQTNESEKPPVDQPVD) are Cytoplasmic-facing. The interval 193–213 (TTDPIDQTNESEKPPVDQPVD) is disordered.

It belongs to the WRB/GET1 family. As to quaternary structure, component of the Golgi to ER traffic (GET) complex, which is composed of GET1, GET2 and GET3. Within the complex, GET1 and GET2 form a heterotetramer which is stabilized by phosphatidylinositol binding and which binds to the GET3 homodimer.

The protein localises to the endoplasmic reticulum membrane. Its subcellular location is the golgi apparatus membrane. Its function is as follows. Required for the post-translational delivery of tail-anchored (TA) proteins to the endoplasmic reticulum. Together with GET2, acts as a membrane receptor for soluble GET3, which recognizes and selectively binds the transmembrane domain of TA proteins in the cytosol. The GET complex cooperates with the HDEL receptor ERD2 to mediate the ATP-dependent retrieval of resident ER proteins that contain a C-terminal H-D-E-L retention signal from the Golgi to the ER. The sequence is that of Golgi to ER traffic protein 1 from Kluyveromyces lactis (strain ATCC 8585 / CBS 2359 / DSM 70799 / NBRC 1267 / NRRL Y-1140 / WM37) (Yeast).